The following is a 90-amino-acid chain: Probable Fe(2+)-trafficking protein (90 aa).

Belongs to the Fe(2+)-trafficking protein family. Monomer.

In terms of biological role, could be a mediator in iron transactions between iron acquisition and iron-requiring processes, such as synthesis and/or repair of Fe-S clusters in biosynthetic enzymes. This chain is Probable Fe(2+)-trafficking protein, found in Serratia proteamaculans (strain 568).